The chain runs to 107 residues: uncharacterized protein (107 aa).

Transmembrane regions (helical) follow at residues Cys-11–Ile-31 and Leu-58–Gln-78.

The protein localises to the mitochondrion membrane. This is an uncharacterized protein from Saccharomyces cerevisiae (strain ATCC 204508 / S288c) (Baker's yeast).